The chain runs to 371 residues: MKVKQQLKQLKPYQPGKPIEEVKREYQLETVIKLASNENPYGCSPLVRQAVMNELDDLALYPDGYSRTLREALAAHIGISEKQLIFGNGSDEVVQIICRAFLQKGTNTVMATPTFPQYRHNAIIEGAEVREIPLQDGHHHLEAMLEAIDDHTRVVWICSPNNPTGTYVNDASLRAFLNKVPQHVLVVVDEAYYEYVQAEDYPNTVSLLQQYENMMILRTFSKAYGLAALRIGYGIAHEHLLQAIEPAREPFNTSRLAQAAAFAALKDQTFIQQCAQKNKQGLDQFYAFCDEYGLRYYKSEGNFILIDFGFSGDEVFTYLLQRGIIVRSGCALGFPTAVRITVGSAEQNETIIRALTNMLKERRDSFCKETF.

At Lys222 the chain carries N6-(pyridoxal phosphate)lysine.

The protein belongs to the class-II pyridoxal-phosphate-dependent aminotransferase family. Histidinol-phosphate aminotransferase subfamily. In terms of assembly, homodimer. The cofactor is pyridoxal 5'-phosphate.

It carries out the reaction L-histidinol phosphate + 2-oxoglutarate = 3-(imidazol-4-yl)-2-oxopropyl phosphate + L-glutamate. Its pathway is amino-acid biosynthesis; L-histidine biosynthesis; L-histidine from 5-phospho-alpha-D-ribose 1-diphosphate: step 7/9. The sequence is that of Histidinol-phosphate aminotransferase from Anoxybacillus flavithermus (strain DSM 21510 / WK1).